Reading from the N-terminus, the 463-residue chain is Retinoic acid receptor RXR-gamma (463 aa).

The interval 1–138 (MYGNYSHFMK…TSPGSLVKHI (138 aa)) is modulating. Positions 16 to 53 (GGSPGHTGSTSMSPSVALPTGKPMDSHPSYTDTPVSAP) are disordered. NR C4-type zinc fingers lie at residues 139–159 (CAIC…CEGC) and 175–199 (CRDN…YQKC). Positions 139–204 (CAICGDRSSG…RYQKCLVMGM (66 aa)) form a DNA-binding region, nuclear receptor. A hinge region spans residues 205 to 230 (KREAVQEERQRSRERAESEAECASSS). Positions 211–222 (EERQRSRERAES) are enriched in basic and acidic residues. The interval 211-232 (EERQRSRERAESEAECASSSHE) is disordered. In terms of domain architecture, NR LBD spans 231-459 (HEDMPVERIL…SFLMEMLETP (229 aa)).

Belongs to the nuclear hormone receptor family. NR2 subfamily. Homodimer. Heterodimer with a RAR molecule. Binds DNA preferentially as a RAR/RXR heterodimer. Interacts with RARA. In terms of processing, acetylated by EP300.

Its subcellular location is the nucleus. The protein resides in the cytoplasm. Receptor for retinoic acid. Retinoic acid receptors bind as heterodimers to their target response elements in response to their ligands, all-trans or 9-cis retinoic acid, and regulate gene expression in various biological processes. The RAR/RXR heterodimers bind to the retinoic acid response elements (RARE) composed of tandem 5'-AGGTCA-3' sites known as DR1-DR5. The high affinity ligand for RXRs is 9-cis retinoic acid. The protein is Retinoic acid receptor RXR-gamma (Rxrg) of Mus musculus (Mouse).